The chain runs to 779 residues: Probable ATP-dependent RNA helicase DHX40 (779 aa).

A disordered region spans residues 1 to 53 (MSRFPAVAGRAPRRQEEGERSRDLQEERPSAVCIADREEKGCTSQEGGTTPTF). The segment covering 13 to 41 (RRQEEGERSRDLQEERPSAVCIADREEKG) has biased composition (basic and acidic residues). The span at 42–53 (CTSQEGGTTPTF) shows a compositional bias: polar residues. One can recognise a Helicase ATP-binding domain in the interval 63–231 (IQAVRDNSFL…FGNCPIFDIP (169 aa)). An ATP-binding site is contributed by 76–83 (GNTGSGKT). Positions 173–176 (DEAH) match the DEAH box motif. Residues 263-442 (TMDIHLNEMA…SVVLTLKCLA (180 aa)) form the Helicase C-terminal domain. The segment at 737 to 779 (SKDVLKKMQRRNDDKSISDARARFLERKQQRTQDHSDTRKETG) is disordered.

It belongs to the DEAD box helicase family. DEAH subfamily.

The catalysed reaction is ATP + H2O = ADP + phosphate + H(+). Its function is as follows. Probable ATP-dependent RNA helicase. The sequence is that of Probable ATP-dependent RNA helicase DHX40 (DHX40) from Pongo abelii (Sumatran orangutan).